Consider the following 305-residue polypeptide: tRNA dimethylallyltransferase (305 aa).

14–21 (GPTASGKS) provides a ligand contact to ATP. 16–21 (TASGKS) serves as a coordination point for substrate. The segment at 39-42 (DSMQ) is interaction with substrate tRNA.

Belongs to the IPP transferase family. Monomer. Requires Mg(2+) as cofactor.

It carries out the reaction adenosine(37) in tRNA + dimethylallyl diphosphate = N(6)-dimethylallyladenosine(37) in tRNA + diphosphate. Functionally, catalyzes the transfer of a dimethylallyl group onto the adenine at position 37 in tRNAs that read codons beginning with uridine, leading to the formation of N6-(dimethylallyl)adenosine (i(6)A). This chain is tRNA dimethylallyltransferase, found in Bradyrhizobium sp. (strain BTAi1 / ATCC BAA-1182).